Consider the following 264-residue polypeptide: Synaptophysin-like protein 2 (264 aa).

The Cytoplasmic segment spans residues 1 to 33; sequence MSSTESPGRTSDKSPRQQVDRLLLGLRWQRLEE. In terms of domain architecture, MARVEL spans 30 to 238; it reads RLEEPLGFIK…NCWFVFKETP (209 aa). A helical membrane pass occupies residues 34 to 54; the sequence is PLGFIKVLQWLFAIFAFGSCG. Topologically, residues 55-116 are vesicular; sequence SYSGETGALV…LMGDFSAPAE (62 aa). A helical transmembrane segment spans residues 117–137; the sequence is FFVTLGIFSFFYTMAALVIYL. At 138-150 the chain is on the cytoplasmic side; that stretch reads RFHKLYTENKRFP. Residues 151–171 form a helical membrane-spanning segment; sequence LVDFCVTVSFTFFWLVAAAAW. Residues 172-213 lie on the Vesicular side of the membrane; the sequence is GKGLTDVKGATRPSSLTAAMSVCHGEEAVCSAGATPSMGLAN. A glycan (N-linked (GlcNAc...) asparagine) is linked at Asn213. A helical transmembrane segment spans residues 214–234; the sequence is LSVLFGFINFFLWAGNCWFVF. Over 235–264 the chain is Cytoplasmic; the sequence is KETPWHGQGQDQGQGPSQESAAEQGAVEKQ. The tract at residues 242 to 264 is disordered; it reads QGQDQGQGPSQESAAEQGAVEKQ.

This sequence belongs to the synaptophysin/synaptobrevin family. Expressed abundantly in skeletal muscle and at lower levels in the kidney.

It is found in the membrane. Functionally, involved in communication between the T-tubular and junctional sarcoplasmic reticulum (SR) membranes. The chain is Synaptophysin-like protein 2 (Sypl2) from Mus musculus (Mouse).